The primary structure comprises 191 residues: GDP-mannose pyrophosphatase (191 aa).

GDP-alpha-D-mannose is bound by residues Tyr17, Lys38–Glu40, Arg67, and Ala85–Leu87. Positions Asp43–Leu180 constitute a Nudix hydrolase domain. Mg(2+)-binding residues include Ala85, Glu100, and Glu104. The Nudix box motif lies at Gly86 to Gly106. GDP-alpha-D-mannose contacts are provided by residues Glu104, Glu127, Asp150 to Glu151, and Lys176. Glu151 is a Mg(2+) binding site.

The protein belongs to the Nudix hydrolase family. NudK subfamily. In terms of assembly, homodimer. It depends on Mg(2+) as a cofactor.

The catalysed reaction is GDP-alpha-D-mannose + H2O = alpha-D-mannose 1-phosphate + GMP + 2 H(+). Functionally, nucleoside diphosphate sugar hydrolase that hydrolyzes GDP-mannose as its preferred substrate, yielding GMP and mannose-1-phosphate. In Escherichia coli (strain K12 / DH10B), this protein is GDP-mannose pyrophosphatase (nudK).